An 89-amino-acid polypeptide reads, in one-letter code: Small ribosomal subunit protein uS15 (89 aa).

Residues 1–18 (MSLDTAEKQKLIENHQVH) show a composition bias toward basic and acidic residues. Residues 1–23 (MSLDTAEKQKLIENHQVHPTDTG) are disordered.

This sequence belongs to the universal ribosomal protein uS15 family. In terms of assembly, part of the 30S ribosomal subunit. Forms a bridge to the 50S subunit in the 70S ribosome, contacting the 23S rRNA.

Its function is as follows. One of the primary rRNA binding proteins, it binds directly to 16S rRNA where it helps nucleate assembly of the platform of the 30S subunit by binding and bridging several RNA helices of the 16S rRNA. Functionally, forms an intersubunit bridge (bridge B4) with the 23S rRNA of the 50S subunit in the ribosome. This is Small ribosomal subunit protein uS15 from Prochlorococcus marinus (strain AS9601).